A 1107-amino-acid chain; its full sequence is OTU domain-containing protein 4 (1107 aa).

N-acetylmethionine is present on M1. Positions 34-155 (LYRKLVAKDG…GNHYDIVYPI (122 aa)) constitute an OTU domain. A cys-loop region spans residues 39–45 (VAKDGSC). D42 is an active-site residue. The active-site Nucleophile is the C45. The segment at 94-104 (LENPQEWVGQV) is variable-loop. Position 120 is a phosphotyrosine (Y120). Residues S126 and S128 each carry the phosphoserine modification. T131 is subject to Phosphothreonine. A his-loop region spans residues 143 to 148 (FSNGNH). Residue H148 is part of the active site. 4 positions are modified to phosphoserine: S166, S199, S202, and S204. Over residues 195 to 206 (EESNSEISDSED) the composition is skewed to acidic residues. 2 disordered regions span residues 195–239 (EESN…SADL) and 322–431 (KHTP…DFDH). Residues 226-236 (GSENPKNNGNS) are compositionally biased toward polar residues. Residue S340 is modified to Phosphoserine. Positions 392–403 (SSHSTGSQSQKS) are enriched in low complexity. A compositionally biased stretch (basic and acidic residues) spans 419–431 (RKPDRERAEDFDH). Y438 bears the Phosphotyrosine mark. Phosphoserine is present on S442. Position 459 is a phosphotyrosine (Y459). Residues 470 to 568 (PALSSSSVSQ…KPAEHIPLSN (99 aa)) form a disordered region. Low complexity predominate over residues 473-486 (SSSSVSQSPSQNSN). Residues 495-528 (HARDRKGSMRRADAEERKDKDSLRGHTHVDKKPE) show a composition bias toward basic and acidic residues. Residues S544 and S895 each carry the phosphoserine modification. The disordered stretch occupies residues 918–1107 (LSAASVSSKH…MGDGHRGQHT (190 aa)). Residues 963-994 (NREREPGSAEPEPKRTIQSLKEKPEKVKDPKT) are compositionally biased toward basic and acidic residues. 4 positions are modified to phosphoserine: S1000, S1005, S1016, and S1017. A compositionally biased stretch (polar residues) spans 1032–1041 (SKQFYNQTYG). S1042 bears the Phosphoserine mark. 2 stretches are compositionally biased toward basic and acidic residues: residues 1060–1079 (VRGE…EGYQ) and 1089–1107 (YRGD…GQHT).

As to quaternary structure, interacts with MYD88; the interaction is direct. Interacts with ALKBH3; the interaction is direct. Interacts with USP7; the interaction is direct. Interacts with USP9X; the interaction is direct. Phosphorylation at Ser-202 and Ser-204 activates 'Lys-63'-specific deubiquitinase activity. Induced upon stimulation with IL1B.

Its subcellular location is the cytoplasm. The protein localises to the nucleus. The enzyme catalyses Thiol-dependent hydrolysis of ester, thioester, amide, peptide and isopeptide bonds formed by the C-terminal Gly of ubiquitin (a 76-residue protein attached to proteins as an intracellular targeting signal).. Its activity is regulated as follows. Phosphorylation on Ser-202 and Ser-204 induces 'Lys-63'-specific deubiquitinase activity. Functionally, deubiquitinase which hydrolyzes the isopeptide bond between the ubiquitin C-terminus and the lysine epsilon-amino group of the target protein. May negatively regulate inflammatory and pathogen recognition signaling in innate immune response. Upon phosphorylation at Ser-202 and Ser-204 residues, via IL-1 receptor and Toll-like receptor signaling pathway, specifically deubiquitinates 'Lys-63'-polyubiquitinated MYD88 adapter protein triggering down-regulation of NF-kappa-B-dependent transcription of inflammatory mediators. Independently of the catalytic activity, acts as a scaffold for alternative deubiquitinases to assemble specific deubiquitinase-substrate complexes. Associates with USP7 and USP9X deubiquitinases to stabilize alkylation repair enzyme ALKBH3, thereby promoting the repair of alkylated DNA lesions. The chain is OTU domain-containing protein 4 from Mus musculus (Mouse).